The sequence spans 421 residues: Trimethyllysine dioxygenase, mitochondrial (421 aa).

Residues 1–15 constitute a mitochondrion transit peptide; sequence MWCHRLSHLQSRLQD. Position 236 is an N6-acetyllysine (lysine 236). The Fe cation site is built by histidine 242, aspartate 244, and histidine 389.

Belongs to the gamma-BBH/TMLD family. As to quaternary structure, homodimer. Requires Fe(2+) as cofactor. The cofactor is L-ascorbate.

The protein localises to the mitochondrion matrix. It catalyses the reaction N(6),N(6),N(6)-trimethyl-L-lysine + 2-oxoglutarate + O2 = (3S)-3-hydroxy-N(6),N(6),N(6)-trimethyl-L-lysine + succinate + CO2. The protein operates within amine and polyamine biosynthesis; carnitine biosynthesis. Converts trimethyllysine (TML) into hydroxytrimethyllysine (HTML). This is Trimethyllysine dioxygenase, mitochondrial (TMLHE) from Bos taurus (Bovine).